Here is a 462-residue protein sequence, read N- to C-terminus: Argininosuccinate lyase (462 aa).

It belongs to the lyase 1 family. Argininosuccinate lyase subfamily.

Its subcellular location is the cytoplasm. It catalyses the reaction 2-(N(omega)-L-arginino)succinate = fumarate + L-arginine. The protein operates within amino-acid biosynthesis; L-arginine biosynthesis; L-arginine from L-ornithine and carbamoyl phosphate: step 3/3. This chain is Argininosuccinate lyase, found in Streptococcus agalactiae serotype V (strain ATCC BAA-611 / 2603 V/R).